A 232-amino-acid polypeptide reads, in one-letter code: Large ribosomal subunit protein uL1 (232 aa).

Belongs to the universal ribosomal protein uL1 family. As to quaternary structure, part of the 50S ribosomal subunit.

Its function is as follows. Binds directly to 23S rRNA. The L1 stalk is quite mobile in the ribosome, and is involved in E site tRNA release. Protein L1 is also a translational repressor protein, it controls the translation of the L11 operon by binding to its mRNA. The protein is Large ribosomal subunit protein uL1 of Bacteroides fragilis (strain ATCC 25285 / DSM 2151 / CCUG 4856 / JCM 11019 / LMG 10263 / NCTC 9343 / Onslow / VPI 2553 / EN-2).